Consider the following 305-residue polypeptide: MSNLPFTVAALYCFAPLPQYESLREPLAQLCCANGIKGTLLLAAEGINGTVAGSAGAIEKLIAHITAIPGLGEPELKYSHASEMPFHRMKVRLKREIVTMGVEGIDPLKSVGTYIAPKDWNALIADENTVVVDKRNDYEYAIGTFEGAIDPQTRTFREFPEWVKQNRDRLEGKKIAMFCTGGIRCEKATAFVKGLGFDDVYHLKGGILKYLEEVPREQSMWNGECFVFDERVAVGHGLAESDVELCRACRRPLTPQDKLSQFFEEGVSCAGCYAERTPEDRARYAERQKQVKLAEKRGANKHIGS.

Residues 125–219 enclose the Rhodanese domain; the sequence is ADENTVVVDK…YLEEVPREQS (95 aa). The Cysteine persulfide intermediate role is filled by C179.

Belongs to the TrhO family.

It carries out the reaction uridine(34) in tRNA + AH2 + O2 = 5-hydroxyuridine(34) in tRNA + A + H2O. Catalyzes oxygen-dependent 5-hydroxyuridine (ho5U) modification at position 34 in tRNAs. This chain is tRNA uridine(34) hydroxylase, found in Brucella abortus (strain S19).